The sequence spans 131 residues: Mesogenin-1 (131 aa).

Residues 22–79 form a disordered region; that stretch reads EDRSFGDSASSPESESFDSACSSPDARSSPTAGCEHAEQQKPKVKMSMRRRMKASERE. Residues 27–45 show a composition bias toward low complexity; the sequence is GDSASSPESESFDSACSSP. The span at 63–73 shows a compositional bias: basic residues; the sequence is PKVKMSMRRRM. A bHLH domain is found at 70–124; that stretch reads RRRMKASEREKLRMRSLAEALHQLRDYLPPGYSRRGQPLTKIQTLKYTIQYIKEL.

Coexpression of ntl and spt is required for expression.

The protein resides in the nucleus. Its function is as follows. Involved in specifying the paraxial, but not dorsal, mesoderm. May regulate the expression of T-box transcription factors required for mesoderm formation and differentiation. The polypeptide is Mesogenin-1 (msgn1) (Danio rerio (Zebrafish)).